The sequence spans 122 residues: UPF0344 protein BcerKBAB4_1054 (122 aa).

4 consecutive transmembrane segments (helical) span residues 6–26 (ITAWALGLILFFVAYSLYSAG), 38–58 (LMYIIIIVTGFMLYMSIVKTA), 65–85 (WYGMKMLAGILVIAGMEMVLV), and 92–112 (PTGAVWGLFIVALVAVLYLGL).

Belongs to the UPF0344 family.

The protein localises to the cell membrane. The polypeptide is UPF0344 protein BcerKBAB4_1054 (Bacillus mycoides (strain KBAB4) (Bacillus weihenstephanensis)).